The following is an 818-amino-acid chain: MSVSRVTMMRKGHSGEVARKPNTVVVSVPPLVKKSSKSRSFHFRYLELCRAKNLTPVPEIRSKSNATTTFLELCGDKLAVSDWQLLTEALHYDLVLQQLVVRLRRTYPQTNIDPIDTEKRARLFRQRPVIYTRFIFNSLVQAIANCVSSNKNLSVLKLEGLPLQDGYIETIAKALADNECLESVSFRKSNIGDKGCEVVCNTAKYLNRIEVFDLSECGLTSKGAEHVADMLKMQKITRFTEGWEKSLRYRSVDVNTIGGLRTVLLADNPEIGDVGIRWITEVLKEDAWIKKIDMEGCGLTDIGANLILDCLELNTAITEFNVRNNEGISKFLQRSIHDRLGCLPEEKQEPEYDLSCVNGLQSLPKNKKVTVSQLLSHTKALEEQLSFERTLRKKAEKLNEKLSHQLMRPDSNHMVQEKAMEGGSQTNISREYVARNDVMPEVIKNSQSYRQSHFNRLVNSAATSPEVTPRSEIVTLRKEQQLQRQQPPPMEVKHLSLEQQIRNLRDVQKKVDLDVEEEEEEEEEEQQAEESQSESEPQNEEQQHYEQQMQVQRKHLQVRKVRSEIKYVENNPKEAAKKNRESKSDHEFANERDFKLNPSVQFETDIGDNVMVNPGHRYEGGGGDTAYVYNYEHEQQQQPVKRGYEHGYVVGVGDGSHRRQRQSQLVEALVQKRVPGASDGHVAQFVSNLERQANAGKTGKKRLKPRPEDDLQVPVGDMHMESSYMSRSEELSSTDVTLENSDYETEATDSTLLSSSKYSSMHVFVRRKQSESMSLTEEAGDGDAGGGGGSGDFGDQNVISPANVYMSLQLQKQREQSA.

Disordered regions lie at residues 513–589 (LDVE…HEFA), 691–748 (RQAN…TEAT), and 768–798 (KQSE…DQNV). Over residues 514–539 (DVEEEEEEEEEEQQAEESQSESEPQN) the composition is skewed to acidic residues. Residues 561-589 (VRSEIKYVENNPKEAAKKNRESKSDHEFA) show a composition bias toward basic and acidic residues. Residues 782-792 (GDAGGGGGSGD) show a composition bias toward gly residues.

Belongs to the CEP78 family.

It is found in the cytoplasm. The protein resides in the cytoskeleton. It localises to the microtubule organizing center. The protein localises to the centrosome. Its subcellular location is the centriole. It is found in the cilium basal body. Its function is as follows. May play a role in cilium biogenesis. The chain is Protein Cep78 homolog from Drosophila melanogaster (Fruit fly).